The primary structure comprises 221 residues: GFP-like non-fluorescent chromoprotein (221 aa).

Residues 62–64 (QYG) constitute a cross-link (2-iminomethyl-5-imidazolinone (Gln-Gly)). Residue Tyr-63 is modified to (E)-2,3-didehydrotyrosine.

This sequence belongs to the GFP family. As to quaternary structure, homotetramer. In terms of processing, contains a chromophore consisting of modified amino acid residues. The chromophore is formed by autocatalytic backbone condensation between Xaa-N and Gly-(N+2), oxidation of Tyr-(N+1) to didehydrotyrosine, and formation of a double bond to the alpha-amino nitrogen of residue Xaa-N. Maturation of the chromophore requires nothing other than molecular oxygen.

Thought to play a role in photoprotection of the coral's resident symbiont microalgae's photosystems from photoinhibition caused by high light levels found near the surface of coral reefs. This Montipora efflorescens (Pore coral) protein is GFP-like non-fluorescent chromoprotein.